Here is a 319-residue protein sequence, read N- to C-terminus: NADH-ubiquinone oxidoreductase chain 1 (319 aa).

The next 8 membrane-spanning stretches (helical) occupy residues 5–25 (TINS…LTLM), 72–92 (LLIS…TPIP), 102–122 (LGLL…LWAG), 146–166 (VTLG…TMQL), 173–193 (FTWL…STLA), 225–245 (FFLT…ILFI), 254–274 (ELFL…FLWI), and 295–315 (LPLT…TSGI).

It belongs to the complex I subunit 1 family.

It localises to the mitochondrion inner membrane. The catalysed reaction is a ubiquinone + NADH + 5 H(+)(in) = a ubiquinol + NAD(+) + 4 H(+)(out). Core subunit of the mitochondrial membrane respiratory chain NADH dehydrogenase (Complex I) that is believed to belong to the minimal assembly required for catalysis. Complex I functions in the transfer of electrons from NADH to the respiratory chain. The immediate electron acceptor for the enzyme is believed to be ubiquinone. This is NADH-ubiquinone oxidoreductase chain 1 (MT-ND1) from Varanus flavescens (Yellow monitor).